A 643-amino-acid polypeptide reads, in one-letter code: Zinc finger protein 64 (643 aa).

11 consecutive C2H2-type zinc fingers follow at residues His173–His195, Tyr201–His223, Phe229–His251, Phe297–His322, His328–His350, His356–His378, Tyr384–His406, Phe412–His434, Phe440–His463, Phe465–His487, and Glu493–His515. Residues Cys495, Cys498, His511, His515, Cys523, Cys526, His539, and His544 each coordinate Zn(2+). Basic and acidic residues predominate over residues Lys538–Asn552. The disordered stretch occupies residues Lys538 to Asn571. Residues Phe578 to His600 form a C2H2-type 12 zinc finger.

The protein belongs to the krueppel C2H2-type zinc-finger protein family. Interacts with NOTCH1. In terms of tissue distribution, widely expressed. Expressed in the brain, spleen, liver, and heart.

The protein localises to the nucleus. May be involved in the regulation of mesenchymal cell differentiation through transactivation of NOTCH1 target genes. This Mus musculus (Mouse) protein is Zinc finger protein 64.